The following is an 86-amino-acid chain: Apolipoprotein C-I (86 aa).

The signal sequence occupies residues 1–26; that stretch reads MRLFLSLPVLVVALLTILEGPGPAQG.

It belongs to the apolipoprotein C1 family.

It localises to the secreted. Its function is as follows. Inhibitor of lipoprotein binding to the low density lipoprotein (LDL) receptor, LDL receptor-related protein, and very low density lipoprotein (VLDL) receptor. Associates with high density lipoproteins (HDL) and the triacylglycerol-rich lipoproteins in the plasma and makes up about 10% of the protein of the VLDL and 2% of that of HDL. Appears to interfere directly with fatty acid uptake and is also the major plasma inhibitor of cholesteryl ester transfer protein (CETP). Binds free fatty acids and reduces their intracellular esterification. Modulates the interaction of APOE with beta-migrating VLDL and inhibits binding of beta-VLDL to the LDL receptor-related protein. This Plecturocebus moloch (Dusky titi monkey) protein is Apolipoprotein C-I (APOC1).